We begin with the raw amino-acid sequence, 155 residues long: Small ribosomal subunit protein uS7 (155 aa).

The protein belongs to the universal ribosomal protein uS7 family. In terms of assembly, part of the 30S ribosomal subunit. Contacts proteins S9 and S11.

One of the primary rRNA binding proteins, it binds directly to 16S rRNA where it nucleates assembly of the head domain of the 30S subunit. Is located at the subunit interface close to the decoding center, probably blocks exit of the E-site tRNA. This Amoebophilus asiaticus (strain 5a2) protein is Small ribosomal subunit protein uS7.